The chain runs to 432 residues: Phosphomethylpyrimidine synthase (432 aa).

Substrate-binding positions include N66, M95, Y124, H163, 185 to 187 (SRG), 226 to 229 (DGLR), and E265. H269 contributes to the Zn(2+) binding site. Y292 contributes to the substrate binding site. H333 provides a ligand contact to Zn(2+). Residues C409, C412, and C416 each coordinate [4Fe-4S] cluster.

This sequence belongs to the ThiC family. The cofactor is [4Fe-4S] cluster.

It catalyses the reaction 5-amino-1-(5-phospho-beta-D-ribosyl)imidazole + S-adenosyl-L-methionine = 4-amino-2-methyl-5-(phosphooxymethyl)pyrimidine + CO + 5'-deoxyadenosine + formate + L-methionine + 3 H(+). It participates in cofactor biosynthesis; thiamine diphosphate biosynthesis. Its function is as follows. Catalyzes the synthesis of the hydroxymethylpyrimidine phosphate (HMP-P) moiety of thiamine from aminoimidazole ribotide (AIR) in a radical S-adenosyl-L-methionine (SAM)-dependent reaction. This Desulforamulus reducens (strain ATCC BAA-1160 / DSM 100696 / MI-1) (Desulfotomaculum reducens) protein is Phosphomethylpyrimidine synthase.